A 147-amino-acid polypeptide reads, in one-letter code: MYPAHLLVLLAVCVSLLGASDIPPQPLNLYQFSNMIQCANHGRRPTKHYMDYGCYCGKGGSGTPVDELDRCCKIHDDCYGEAEKSQNCAPYWTWYTWKCGSDGPQCDDSETGCQRSVCECDAIAAKCFAKAPYNDANWDIDTETRCQ.

The signal sequence occupies residues 1–19; it reads MYPAHLLVLLAVCVSLLGA. Positions 20 to 27 are excised as a propeptide; sequence SDIPPQPL. 7 cysteine pairs are disulfide-bonded: C38–C99, C54–C146, C56–C72, C71–C127, C78–C120, C88–C113, and C106–C118. Y55, G57, and G59 together coordinate Ca(2+). Residue H75 is part of the active site. D76 is a binding site for Ca(2+). D121 is a catalytic residue.

This sequence belongs to the phospholipase A2 family. Group I subfamily. D49 sub-subfamily. Ca(2+) serves as cofactor. In terms of tissue distribution, expressed by the venom gland.

It localises to the secreted. The enzyme catalyses a 1,2-diacyl-sn-glycero-3-phosphocholine + H2O = a 1-acyl-sn-glycero-3-phosphocholine + a fatty acid + H(+). In terms of biological role, snake venom phospholipase A2 (PLA2) that inhibits collagen-induced platelet aggregation. PLA2 catalyzes the calcium-dependent hydrolysis of the 2-acyl groups in 3-sn-phosphoglycerides. The sequence is that of Acidic phospholipase A2 S7-48J from Austrelaps superbus (Lowland copperhead snake).